The following is a 209-amino-acid chain: Ribosomal RNA large subunit methyltransferase E (209 aa).

Positions 63, 65, 83, 99, and 124 each coordinate S-adenosyl-L-methionine. The Proton acceptor role is filled by Lys164.

It belongs to the class I-like SAM-binding methyltransferase superfamily. RNA methyltransferase RlmE family.

Its subcellular location is the cytoplasm. It catalyses the reaction uridine(2552) in 23S rRNA + S-adenosyl-L-methionine = 2'-O-methyluridine(2552) in 23S rRNA + S-adenosyl-L-homocysteine + H(+). Functionally, specifically methylates the uridine in position 2552 of 23S rRNA at the 2'-O position of the ribose in the fully assembled 50S ribosomal subunit. This is Ribosomal RNA large subunit methyltransferase E from Shewanella pealeana (strain ATCC 700345 / ANG-SQ1).